The chain runs to 579 residues: Pre-mRNA-processing factor 17 (579 aa).

Positions 1–19 (MSAAIAALAASYGSGSGSE) are enriched in low complexity. Disordered stretches follow at residues 1 to 34 (MSAA…LPAA) and 204 to 237 (DVAK…PGEE). WD repeat units follow at residues 286-326 (GHTK…RCLR), 330-369 (GHSK…CISR), 371-413 (TNRK…IVQE), 416-455 (RHLG…DFKY), 459-498 (PSMH…RLNK), 504-545 (GHMV…LYSR), and 548-578 (AHDK…IKLW).

As to quaternary structure, component of the catalytic spliceosome C complexes. Component of the postcatalytic spliceosome P complex. Interacts with PPIL1; this interaction leads to CDC40 isomerization. In terms of processing, undergoes isomerization of the peptide bond between Gly-94 and Pro-95. The reaction is catalyzed by PPIL1.

The protein resides in the nucleus. Its subcellular location is the nucleus speckle. In terms of biological role, required for pre-mRNA splicing as component of the activated spliceosome. Plays an important role in embryonic brain development; this function does not require proline peptide bond isomerization. This chain is Pre-mRNA-processing factor 17 (Cdc40), found in Mus musculus (Mouse).